The primary structure comprises 351 residues: Renin receptor (351 aa).

The N-terminal stretch at 1-17 (MAVLVVFLSFLVADVFG) is a signal peptide. The Extracellular segment spans residues 18 to 303 (NEFSILRSPG…YNLAYKYNFE (286 aa)). The helical transmembrane segment at 304 to 324 (YPVVFNLVLWIMIGLALTLIV) threads the bilayer. Over 325-351 (TCYNIWNMDPGYDSIIYRMTNQKIRMD) the chain is Cytoplasmic. Residues 347-351 (KIRMD) carry the Mediates retrograde transport to the ER motif.

As to quaternary structure, interacts with renin. Accessory component of the multisubunit proton-transporting vacuolar (V)-ATPase protein pump. Interacts (via N-terminus) with ATP6AP1 (via N-terminus). Interacts with ATP6V0D1; ATP6V0D1 is a V-ATPase complex subunit and the interaction promotes V-ATPase complex assembly. Interacts with TMEM9; TMEM9 is a V-ATPase assembly regulator and the interaction induces the interaction with ATP6V0D1. Interacts with VMA21 (via N-terminus); VMA21 is a V-ATPase accessory component. In terms of processing, phosphorylated. Proteolytically cleaved by a furin-like convertase in the trans-Golgi network to generate N- and C-terminal fragments. Expressed in the brain.

The protein localises to the endoplasmic reticulum membrane. The protein resides in the lysosome membrane. It localises to the cytoplasmic vesicle. Its subcellular location is the autophagosome membrane. It is found in the cell projection. The protein localises to the dendritic spine membrane. The protein resides in the axon. It localises to the endosome membrane. Its subcellular location is the clathrin-coated vesicle membrane. It is found in the secretory vesicle. The protein localises to the synaptic vesicle membrane. Functionally, multifunctional protein which functions as a renin, prorenin cellular receptor and is involved in the assembly of the lysosomal proton-transporting V-type ATPase (V-ATPase) and the acidification of the endo-lysosomal system. May mediate renin-dependent cellular responses by activating ERK1 and ERK2. By increasing the catalytic efficiency of renin in AGT/angiotensinogen conversion to angiotensin I, may also play a role in the renin-angiotensin system (RAS). Through its function in V-type ATPase (v-ATPase) assembly and acidification of the lysosome it regulates protein degradation and may control different signaling pathways important for proper brain development, synapse morphology and synaptic transmission. The chain is Renin receptor (ATP6AP2) from Bos taurus (Bovine).